The sequence spans 441 residues: Zinc finger and BTB domain-containing protein 8A (441 aa).

A BTB domain is found at C24–G92. Polar residues-rich tracts occupy residues E146 to Q170 and K178 to L197. The tract at residues E146–E252 is disordered. 2 positions are modified to phosphoserine: S161 and S167. Glycyl lysine isopeptide (Lys-Gly) (interchain with G-Cter in SUMO2) cross-links involve residues K178, K182, and K199. Positions T198–K208 are enriched in basic and acidic residues. Residues S234–Q248 are compositionally biased toward low complexity. C2H2-type zinc fingers lie at residues F282–H304 and Y310–H333. A Glycyl lysine isopeptide (Lys-Gly) (interchain with G-Cter in SUMO2) cross-link involves residue K437.

The protein resides in the nucleus. In terms of biological role, may be involved in transcriptional regulation. This chain is Zinc finger and BTB domain-containing protein 8A (ZBTB8A), found in Bos taurus (Bovine).